The following is a 185-amino-acid chain: Endoribonuclease YbeY (185 aa).

The Zn(2+) site is built by H135, H139, and H145.

Belongs to the endoribonuclease YbeY family. Zn(2+) serves as cofactor.

It is found in the cytoplasm. In terms of biological role, single strand-specific metallo-endoribonuclease involved in late-stage 70S ribosome quality control and in maturation of the 3' terminus of the 16S rRNA. The chain is Endoribonuclease YbeY from Parasynechococcus marenigrum (strain WH8102).